A 284-amino-acid chain; its full sequence is Homoserine O-acetyltransferase 2 (284 aa).

Cys133 acts as the Acyl-thioester intermediate in catalysis. Substrate-binding residues include Lys154 and Ser178. The active-site Proton acceptor is the His220. The active site involves Glu222. Position 234 (Arg234) interacts with substrate.

The protein belongs to the MetA family.

It localises to the cytoplasm. The catalysed reaction is L-homoserine + acetyl-CoA = O-acetyl-L-homoserine + CoA. Its pathway is amino-acid biosynthesis; L-methionine biosynthesis via de novo pathway; O-acetyl-L-homoserine from L-homoserine: step 1/1. In terms of biological role, transfers an acetyl group from acetyl-CoA to L-homoserine, forming acetyl-L-homoserine. This chain is Homoserine O-acetyltransferase 2, found in Ilyobacter polytropus (strain ATCC 51220 / DSM 2926 / LMG 16218 / CuHBu1).